We begin with the raw amino-acid sequence, 585 residues long: Eukaryotic translation initiation factor 3 subunit D (585 aa).

A compositionally biased stretch (basic and acidic residues) spans 43–60 (LGRMADWTGDGKDRDRGG). Disordered stretches follow at residues 43–62 (LGRM…GGRQ) and 109–152 (RGGG…NRSA). Gly residues predominate over residues 109–130 (RGGGTVFRGRGQRGVGQRGGRA). The RNA gate stretch occupies residues 300-314 (SIDLVTVNENAADAP). Positions 560-585 (VPPNTFEEDDEAAEEQEEKAEEESEE) are disordered. Positions 565–585 (FEEDDEAAEEQEEKAEEESEE) are enriched in acidic residues.

This sequence belongs to the eIF-3 subunit D family. Component of the eukaryotic translation initiation factor 3 (eIF-3) complex.

The protein resides in the cytoplasm. MRNA cap-binding component of the eukaryotic translation initiation factor 3 (eIF-3) complex, which is involved in protein synthesis of a specialized repertoire of mRNAs and, together with other initiation factors, stimulates binding of mRNA and methionyl-tRNAi to the 40S ribosome. The eIF-3 complex specifically targets and initiates translation of a subset of mRNAs involved in cell proliferation. In the eIF-3 complex, eif3d specifically recognizes and binds the 7-methylguanosine cap of a subset of mRNAs. The sequence is that of Eukaryotic translation initiation factor 3 subunit D from Neosartorya fischeri (strain ATCC 1020 / DSM 3700 / CBS 544.65 / FGSC A1164 / JCM 1740 / NRRL 181 / WB 181) (Aspergillus fischerianus).